Reading from the N-terminus, the 282-residue chain is Shikimate dehydrogenase (NADP(+)) (282 aa).

Shikimate contacts are provided by residues 24–26 (SRS) and T71. The active-site Proton acceptor is the K75. An NADP(+)-binding site is contributed by D87. Residues N96 and D112 each coordinate shikimate. NADP(+) is bound by residues 138–142 (GAGGA), 162–167 (NRTRIR), and L227. Residue Y229 participates in shikimate binding. G250 contacts NADP(+).

It belongs to the shikimate dehydrogenase family. In terms of assembly, homodimer.

The catalysed reaction is shikimate + NADP(+) = 3-dehydroshikimate + NADPH + H(+). The protein operates within metabolic intermediate biosynthesis; chorismate biosynthesis; chorismate from D-erythrose 4-phosphate and phosphoenolpyruvate: step 4/7. Involved in the biosynthesis of the chorismate, which leads to the biosynthesis of aromatic amino acids. Catalyzes the reversible NADPH linked reduction of 3-dehydroshikimate (DHSA) to yield shikimate (SA). The protein is Shikimate dehydrogenase (NADP(+)) of Paracoccus denitrificans (strain Pd 1222).